The following is a 275-amino-acid chain: Probable aquaporin NIP7-1 (275 aa).

A compositionally biased stretch (basic and acidic residues) spans 1–11; it reads MNGEARSRVVD. The segment at 1–26 is disordered; sequence MNGEARSRVVDQEAGSTPSTLRDEDH. 2 helical membrane-spanning segments follow: residues 47 to 67 and 76 to 96; these read IVMA…GVIS and VGLL…VYSI. The NPA 1 motif lies at 105–107; it reads NPS. 3 helical membrane passes run 127–147, 161–181, and 192–212; these read ITAQ…VYGV, VSAF…ASAL, and LTGF…GPIS. Residues 217 to 219 carry the NPA 2 motif; that stretch reads NPA. A helical membrane pass occupies residues 231-251; it reads FEDLWIYMTAPVIGAIIGVLT. Serine 272 carries the post-translational modification Phosphoserine.

This sequence belongs to the MIP/aquaporin (TC 1.A.8) family. NIP (TC 1.A.8.12) subfamily. Expressed in floral buds.

It localises to the membrane. Functionally, aquaporins facilitate the transport of water and small neutral solutes across cell membranes. The chain is Probable aquaporin NIP7-1 (NIP7-1) from Arabidopsis thaliana (Mouse-ear cress).